A 207-amino-acid polypeptide reads, in one-letter code: Ribosomal RNA large subunit methyltransferase E (207 aa).

S-adenosyl-L-methionine is bound by residues glycine 60, tryptophan 62, aspartate 80, aspartate 96, and aspartate 121. Lysine 161 (proton acceptor) is an active-site residue.

The protein belongs to the class I-like SAM-binding methyltransferase superfamily. RNA methyltransferase RlmE family.

The protein resides in the cytoplasm. The enzyme catalyses uridine(2552) in 23S rRNA + S-adenosyl-L-methionine = 2'-O-methyluridine(2552) in 23S rRNA + S-adenosyl-L-homocysteine + H(+). Functionally, specifically methylates the uridine in position 2552 of 23S rRNA at the 2'-O position of the ribose in the fully assembled 50S ribosomal subunit. The sequence is that of Ribosomal RNA large subunit methyltransferase E from Pseudomonas aeruginosa (strain UCBPP-PA14).